Reading from the N-terminus, the 185-residue chain is Pericyclase pydY (185 aa).

This sequence belongs to the pericyclase pydY family.

It functions in the pathway mycotoxin biosynthesis. Pericyclase; part of the gene cluster that mediates the biosynthesis of pyrrocidines, fungal natural products containing a macrocyclic para-cyclophane connected to a decahydrofluorene ring system that show potent antibiotic activities toward Gram-negative bacteria. Within the pathway, pydY is involved in the late Diels-Alder cycloaddition step that leads to the formation of the decahydrofluorene core. The pathway begins with the PKS-NRPS pydA which, with the help of the trans-enoyl reductase pydC, synthesizes the polyketide-tyrosyl acyl thioester product which can be reductively off-loaded by the terminal reductase (R) domain in pydA. The alpha/beta hydrolase pydG is then required to catalyze the subsequent Knoevenagel condensation that affords the 3-pyrrolin-2-one ring, whereas the four proteins pydB, pydE, pydX and pydZ then function synergistically to form the cyclophane. PydB and the membrane-bound pydX and pydZ are lipid-binding proteins that can sequester and mold the pdyG product into the inverse S-shape. Binding of the medium chain reductase pydE to the complex would trigger the cascade oxidative cyclization. PydY is involved in the Diels-Alder cycloaddition that forms the decahydrofluorene core. Additional non-enzymatic hydroxylation yields pyrrocidine A2 which can be further reduced into pyrrocidine B by an endogenous reductase. This chain is Pericyclase pydY, found in Acremonium sp.